The following is a 104-amino-acid chain: Co-chaperonin GroES 5 (104 aa).

This sequence belongs to the GroES chaperonin family. In terms of assembly, heptamer of 7 subunits arranged in a ring. Interacts with the chaperonin GroEL.

The protein localises to the cytoplasm. In terms of biological role, together with the chaperonin GroEL, plays an essential role in assisting protein folding. The GroEL-GroES system forms a nano-cage that allows encapsulation of the non-native substrate proteins and provides a physical environment optimized to promote and accelerate protein folding. GroES binds to the apical surface of the GroEL ring, thereby capping the opening of the GroEL channel. The sequence is that of Co-chaperonin GroES 5 from Rhizobium meliloti (strain 1021) (Ensifer meliloti).